The primary structure comprises 336 residues: Potassium channel subfamily K member 1 (336 aa).

Residues 1–20 lie on the Cytoplasmic side of the membrane; the sequence is MLQSLAGSSCVRLVERHRSA. The chain crosses the membrane as a helical span at residues 21–41; sequence WCFGFLVLGYLLYLVFGAVVF. Over 42-103 the chain is Extracellular; it reads SSVELPYEDL…SNASGNWNWD (62 aa). The N-linked (GlcNAc...) asparagine glycan is linked to Asn95. Positions 104-116 form an intramembrane region, helical; it reads FTSALFFASTVLS. An intramembrane segment occupies 117–122; that stretch reads TTGYGH. Residues 117–122 are selectivity filter 1; it reads TTGYGH. Topologically, residues 123 to 132 are extracellular; the sequence is TVPLSDGGKA. Residues 133 to 156 traverse the membrane as a helical segment; sequence FCIIYSVIGIPFTLLFLTAVVQRI. At 157 to 181 the chain is on the cytoplasmic side; sequence TVHVTRRPVLYFHIRWGFSKQVVAI. The chain crosses the membrane as a helical span at residues 182-202; it reads VHAVLLGFVTVSCFFFIPAAV. Residues 203 to 211 are Extracellular-facing; it reads FSVLEDDWN. The segment at residues 212–224 is an intramembrane region (helical); sequence FLESFYFCFISLS. A selectivity filter 2 region spans residues 225-230; it reads TIGLGD. An intramembrane segment occupies 225–231; sequence TIGLGDY. At 232–243 the chain is on the extracellular side; that stretch reads VPGEGYNQKFRE. The chain crosses the membrane as a helical span at residues 244 to 267; the sequence is LYKIGITCYLLLGLIAMLVVLETF. The Cytoplasmic segment spans residues 268–336; the sequence is CELHELKKFR…SACVDGPANH (69 aa). Lys274 is covalently cross-linked (Glycyl lysine isopeptide (Lys-Gly) (interchain with G-Cter in SUMO)). Residues 293–299 are important for intracellular retention in recycling endosomes; it reads IIEHDQL. A Phosphoserine modification is found at Ser326.

The protein belongs to the two pore domain potassium channel (TC 1.A.1.8) family. In terms of assembly, homodimer; disulfide-linked. Heterodimer with KCNK2; disulfide-linked. In astrocytes, forms mostly heterodimeric potassium channels with KCNK2, with only a minor proportion of functional channels containing homodimeric KCNK1. Interacts with KCNK3 and KCNK9, forming functional heterodimeric channels. Interacts with GNG4. Identified in a complex with PSD and ARF6; interacts only with PSD that is bound to ARF6. Interacts with UBE2I. Sumoylation is controversial. Sumoylated by UBE2I. Not sumoylated when expressed in xenopus oocytes or mammalian cells. Sumoylation inactivates the channel, but does not interfere with expression at the cell membrane. Sumoylation of a single subunit is sufficient to silence the dimeric channel. Sumoylation of KCNK1 is sufficient to silence heterodimeric channels formed by KCNK1 and KCNK3 or KCNK9. Desumoylated by SENP1; this activates the channel. Desumoylated by SENP1; this strongly increases halothane-mediated activation of heterodimeric channels formed with KCNK9. SENP1 treatment has no effect. As to expression, detected in bronchial epithelial cells. Detected in heart left atrium and left ventricle. Detected in cardiac myocytes (at protein level). Widely expressed with high levels in heart, brain and kidney, and lower levels in colon, ovary, placenta, lung and liver. Highly expressed in cerebellum, and detected at lower levels in amygdala, caudate nucleus, brain cortex, hippocampus, putamen, substantia nigra, thalamus, dorsal root ganglion, spinal cord, pituitary, heart, kidney, lung, placenta, pancreas, stomach, small intestine, uterus and prostate. Detected in right and left heart ventricle and atrium, and in heart Purkinje fibers.

The protein localises to the cell membrane. Its subcellular location is the recycling endosome. It localises to the synaptic cell membrane. It is found in the cytoplasmic vesicle. The protein resides in the perikaryon. The protein localises to the cell projection. Its subcellular location is the dendrite. It localises to the apical cell membrane. It carries out the reaction K(+)(in) = K(+)(out). The catalysed reaction is NH4(+)(in) = NH4(+)(out). It catalyses the reaction Na(+)(in) = Na(+)(out). The enzyme catalyses Rb(+)(in) = Rb(+)(out). It carries out the reaction Cs(+)(in) = Cs(+)(out). The catalysed reaction is Li(+)(in) = Li(+)(out). It catalyses the reaction L-glutamate(out) = L-glutamate(in). The enzyme catalyses chloride(in) = chloride(out). Its activity is regulated as follows. Inhibited by Ba(2+) ions and quinidine. Inhibited by quinine. Is slightly inhibited by 10 mM tetraethylammonium (TEA), and only marginally inhibited by 4-aminopyridine, charybdotoxin and dendrotoxin. Lowering the extracellular pH to below 6.5 transiently activates the channel, and then inhibits channel activity. Inhibited when the intracellular pH is decreased down to pH 6.0, but this may be due to indirect effects. In terms of biological role, ion channel that contributes to passive transmembrane potassium transport and to the regulation of the resting membrane potential in brain astrocytes, but also in kidney and in other tissues. Forms dimeric channels through which potassium ions pass in accordance with their electrochemical gradient. The channel is selective for K(+) ions at physiological potassium concentrations and at neutral pH, but becomes permeable to Na(+) at subphysiological K(+) levels and upon acidification of the extracellular medium. The homodimer has very low potassium channel activity, when expressed in heterologous systems, and can function as weakly inward rectifying potassium channel. Channel activity is modulated by activation of serotonin receptors. Heterodimeric channels containing KCNK1 and KCNK2 have much higher activity, and may represent the predominant form in astrocytes. Heterodimeric channels containing KCNK1 and KCNK3 or KCNK9 have much higher activity. Heterodimeric channels formed by KCNK1 and KCNK9 may contribute to halothane-sensitive currents. Mediates outward rectifying potassium currents in dentate gyrus granule cells and contributes to the regulation of their resting membrane potential. Contributes to the regulation of action potential firing in dentate gyrus granule cells and down-regulates their intrinsic excitability. In astrocytes, the heterodimer formed by KCNK1 and KCNK2 is required for rapid glutamate release in response to activation of G-protein coupled receptors, such as F2R and CNR1. Required for normal ion and water transport in the kidney. Contributes to the regulation of the resting membrane potential of pancreatic beta cells. The low channel activity of homodimeric KCNK1 may be due to sumoylation. The low channel activity may be due to rapid internalization from the cell membrane and retention in recycling endosomes. Permeable to monovalent cations with ion selectivity for K(+) &gt; Rb(+) &gt;&gt; NH4(+) &gt;&gt; Cs(+) = Na(+) = Li(+). The chain is Potassium channel subfamily K member 1 (KCNK1) from Homo sapiens (Human).